Reading from the N-terminus, the 257-residue chain is Pyrroline-5-carboxylate reductase (257 aa).

Belongs to the pyrroline-5-carboxylate reductase family.

The protein resides in the cytoplasm. The catalysed reaction is L-proline + NADP(+) = (S)-1-pyrroline-5-carboxylate + NADPH + 2 H(+). It catalyses the reaction L-proline + NAD(+) = (S)-1-pyrroline-5-carboxylate + NADH + 2 H(+). The protein operates within amino-acid biosynthesis; L-proline biosynthesis; L-proline from L-glutamate 5-semialdehyde: step 1/1. Catalyzes the reduction of 1-pyrroline-5-carboxylate (PCA) to L-proline. This chain is Pyrroline-5-carboxylate reductase, found in Helicobacter pylori (strain J99 / ATCC 700824) (Campylobacter pylori J99).